The chain runs to 932 residues: Isoleucine--tRNA ligase (932 aa).

The short motif at 58–68 (PYANGDIHIGH) is the 'HIGH' region element. An L-isoleucyl-5'-AMP-binding site is contributed by Glu559. A 'KMSKS' region motif is present at residues 600 to 604 (KMSKS). Lys603 contacts ATP. Zn(2+) contacts are provided by Cys895, Cys898, Cys915, and Cys918.

It belongs to the class-I aminoacyl-tRNA synthetase family. IleS type 1 subfamily. Monomer. The cofactor is Zn(2+).

It localises to the cytoplasm. It catalyses the reaction tRNA(Ile) + L-isoleucine + ATP = L-isoleucyl-tRNA(Ile) + AMP + diphosphate. Catalyzes the attachment of isoleucine to tRNA(Ile). As IleRS can inadvertently accommodate and process structurally similar amino acids such as valine, to avoid such errors it has two additional distinct tRNA(Ile)-dependent editing activities. One activity is designated as 'pretransfer' editing and involves the hydrolysis of activated Val-AMP. The other activity is designated 'posttransfer' editing and involves deacylation of mischarged Val-tRNA(Ile). The sequence is that of Isoleucine--tRNA ligase from Saccharophagus degradans (strain 2-40 / ATCC 43961 / DSM 17024).